The following is a 496-amino-acid chain: Lysine--tRNA ligase (496 aa).

Mg(2+) contacts are provided by E409 and E416.

This sequence belongs to the class-II aminoacyl-tRNA synthetase family. As to quaternary structure, homodimer. The cofactor is Mg(2+).

The protein localises to the cytoplasm. The enzyme catalyses tRNA(Lys) + L-lysine + ATP = L-lysyl-tRNA(Lys) + AMP + diphosphate. This is Lysine--tRNA ligase from Streptococcus pneumoniae serotype 19F (strain G54).